We begin with the raw amino-acid sequence, 1133 residues long: Protein TOPLESS-RELATED PROTEIN 2 (1133 aa).

Residues Leu-4–Phe-36 form the LisH domain. Residues Phe-34–Lys-92 form the CTLH domain. WD repeat units lie at residues Asn-344–His-384, Ala-451–Thr-492, Gly-495–Asp-536, Ala-539–Thr-582, Phe-586–Thr-625, Gly-630–Arg-669, Ala-771–Asn-810, Asn-838–Thr-876, Ala-879–Lys-919, Gly-922–Ser-961, Arg-970–Ser-1011, and Ala-1015–Arg-1054. Residues Asp-1102–Val-1133 are disordered.

In terms of assembly, tetramer. Interacts with D53, probably via the EAR motifs. Binds to AP2-1/TOE1, AP2-3/SNB and AP2-2/IDS1. Interacts with WOX1. Interacts with MOF1. In terms of tissue distribution, expressed in stems and panicles. Detected in roots, seeds, leaves and sheath. Expressed in the meristem and lateral organ primordia.

The protein localises to the nucleus. Its function is as follows. Transcriptional corepressor involved in branch formation regulation, presumably by suppressing primary branch formation and promoting secondary branch formation. Required for the cell elongation in the first internode and pollen development. Probable downstream regulator of strigolactones signaling important in axillary meristem maintenance. Acts in auxin signaling and is associated with the regulation of histone deacetylation. Essential for the function of miR172 microRNA and its target genes in regulating panicle development. The protein is Protein TOPLESS-RELATED PROTEIN 2 of Oryza sativa subsp. japonica (Rice).